Consider the following 324-residue polypeptide: Polycomb complex protein BMI-1 (324 aa).

The RING-type zinc finger occupies 18–57; that stretch reads CVLCGGYFIDATTIIECLHSFCKTCIVRYLETSKYCPICD. The short motif at 81–95 is the Nuclear localization signal element; sequence KLVPGLFKNEMKRRR. The interval 160-180 is interaction with PHC2; it reads RYLRCPAAMTVMHLRKFLRSK. The tract at residues 162–226 is interaction with E4F1; that stretch reads LRCPAAMTVM…GPLPLKYRVR (65 aa). Residues 232-324 are disordered; sequence MKMSHQRDGL…LNGSSATSSG (93 aa). Over residues 264–276 the composition is skewed to low complexity; it reads PSTSSCLPSPSTP. A compositionally biased stretch (polar residues) spans 277–307; it reads VQSPHPQFPHISSTMNGTSNSPSANHQSSFA. Over residues 313–324 the composition is skewed to low complexity; that stretch reads SSLNGSSATSSG.

As to quaternary structure, component of a PRC1-like complex. Identified in a PRC1-like HPRC-H complex with CBX2, CBX4, CBX8, PHC1, PHC2, PHC3, RING1 and RNF2. Interacts with RNF2/RING2. Interacts with RING1. Part of a complex that contains RNF2, UB2D3 and BMI1, where RNF2 and BMI1 form a tight heterodimer, and UB2D3 interacts only with RNF2. The complex composed of RNF2, UB2D3 and BMI1 binds nucleosomes, and has activity only with nucleosomal histone H2A. Interacts with CBX7 and CBX8. Interacts with SPOP. Part of a complex consisting of BMI1, CUL3 and SPOP. Interacts with E4F1. Interacts with PHC2. Interacts with zinc finger protein ZNF277. May be part of a complex including at least ZNF277, BMI1 and RNF2/RING2. In terms of processing, may be polyubiquitinated; which does not lead to proteasomal degradation. Monoubiquitinated. In terms of tissue distribution, detected in most organs with high expression levels in thymus, heart, brain and testis.

The protein localises to the nucleus. It localises to the cytoplasm. Functionally, component of a Polycomb group (PcG) multiprotein PRC1-like complex, a complex class required to maintain the transcriptionally repressive state of many genes, including Hox genes, throughout development. PcG PRC1 complex acts via chromatin remodeling and modification of histones; it mediates monoubiquitination of histone H2A 'Lys-119', rendering chromatin heritably changed in its expressibility. The complex composed of RNF2, UB2D3 and BMI1 binds nucleosomes, and has activity only with nucleosomal histone H2A. In the PRC1-like complex, regulates the E3 ubiquitin-protein ligase activity of RNF2/RING2. The sequence is that of Polycomb complex protein BMI-1 (Bmi1) from Mus musculus (Mouse).